A 126-amino-acid polypeptide reads, in one-letter code: Lymphocyte antigen 6E (126 aa).

Positions 1–20 (MKAFLFAVLAAVLCVERAHT) are cleaved as a signal peptide. In terms of domain architecture, UPAR/Ly6 spans 21-98 (LICFSCSDAS…CCDSFLCNIS (78 aa)). 5 disulfide bridges follow: C23/C48, C26/C35, C41/C69, C73/C89, and C90/C95. N-linked (GlcNAc...) asparagine glycosylation is present at N96. A lipid anchor (GPI-anchor amidated serine) is attached at S98. The propeptide at 99–126 (GSSSVKASYAVLALGILVSFVYVLRARE) is removed in mature form.

Expressed by thymic blast cells.

Its subcellular location is the cell membrane. The chain is Lymphocyte antigen 6E (LY6E) from Gallus gallus (Chicken).